Consider the following 190-residue polypeptide: Voltage-dependent calcium channel gamma-like subunit (190 aa).

Transmembrane regions (helical) follow at residues 25 to 45 (FIRT…SVSI), 96 to 116 (ALAV…QLCE), 131 to 151 (LLVS…LLRN), and 155 to 175 (LIGF…LFLN).

It belongs to the PMP-22/EMP/MP20 family. CACNG subfamily. As to quaternary structure, the L-type calcium channel is composed of five subunits: alpha-1, alpha-2/delta, beta and gamma.

Its subcellular location is the membrane. In terms of biological role, thought to stabilize the calcium channel in an inactivated (closed) state. Modulates calcium current when coexpressed with CACNA1G. The sequence is that of Voltage-dependent calcium channel gamma-like subunit from Homo sapiens (Human).